Here is a 262-residue protein sequence, read N- to C-terminus: Apolipoprotein A-I-2 (262 aa).

Positions 1–18 (MQFLALALTILLAAATQA) are cleaved as a signal peptide. Residues 32-63 (VKVAMMEYMAQVKETAQRSIDHLDDTEYKEYK) are 3 X approximate tandem repeats. 2 repeat units span residues 64 to 85 (VQLS…ESLA) and 87 to 107 (YSEA…AEVM). The 10 X approximate tandem repeats stretch occupies residues 64-262 (VQLSQSLDNL…YETISQAMKA (199 aa)). A 3; half-length repeat occupies 108 to 118 (KDVEELRSQLE). Repeat copies occupy residues 119 to 140 (PKRA…KRLE), 141 to 162 (PLIK…VKIE), 163 to 184 (PVVE…AKLM), 185 to 206 (PIVE…TLAS), and 207 to 228 (PYAE…EKVV). A 9; half-length repeat occupies 229–239 (PLTTDFKGQLG). Repeat 10 spans residues 240–262 (PAAEQAKEKLMALYETISQAMKA).

It belongs to the apolipoprotein A1/A4/E family.

The protein resides in the secreted. In terms of biological role, participates in the reverse transport of cholesterol from tissues to the liver for excretion by promoting cholesterol efflux from tissues and by acting as a cofactor for the lecithin cholesterol acyltransferase (LCAT). The polypeptide is Apolipoprotein A-I-2 (Oncorhynchus mykiss (Rainbow trout)).